The primary structure comprises 493 residues: Glutamyl-tRNA(Gln) amidotransferase subunit A (493 aa).

Catalysis depends on charge relay system residues lysine 79 and serine 159. Residue serine 183 is the Acyl-ester intermediate of the active site.

Belongs to the amidase family. GatA subfamily. Heterotrimer of A, B and C subunits.

It catalyses the reaction L-glutamyl-tRNA(Gln) + L-glutamine + ATP + H2O = L-glutaminyl-tRNA(Gln) + L-glutamate + ADP + phosphate + H(+). Its function is as follows. Allows the formation of correctly charged Gln-tRNA(Gln) through the transamidation of misacylated Glu-tRNA(Gln) in organisms which lack glutaminyl-tRNA synthetase. The reaction takes place in the presence of glutamine and ATP through an activated gamma-phospho-Glu-tRNA(Gln). This chain is Glutamyl-tRNA(Gln) amidotransferase subunit A, found in Brucella canis (strain ATCC 23365 / NCTC 10854 / RM-666).